Consider the following 221-residue polypeptide: Kynurenine formamidase (221 aa).

Phe-30 provides a ligand contact to substrate. The Zn(2+) site is built by His-60, His-64, and Asp-66. The active-site Proton donor/acceptor is His-70. The Zn(2+) site is built by His-172 and Glu-184.

This sequence belongs to the Cyclase 1 superfamily. KynB family. As to quaternary structure, homodimer. The cofactor is Zn(2+).

The enzyme catalyses N-formyl-L-kynurenine + H2O = L-kynurenine + formate + H(+). It participates in amino-acid degradation; L-tryptophan degradation via kynurenine pathway; L-kynurenine from L-tryptophan: step 2/2. In terms of biological role, catalyzes the hydrolysis of N-formyl-L-kynurenine to L-kynurenine, the second step in the kynurenine pathway of tryptophan degradation. The chain is Kynurenine formamidase from Polaromonas sp. (strain JS666 / ATCC BAA-500).